The sequence spans 100 residues: Urease subunit gamma (100 aa).

The protein belongs to the urease gamma subunit family. In terms of assembly, heterotrimer of UreA (gamma), UreB (beta) and UreC (alpha) subunits. Three heterotrimers associate to form the active enzyme.

The protein resides in the cytoplasm. It carries out the reaction urea + 2 H2O + H(+) = hydrogencarbonate + 2 NH4(+). The protein operates within nitrogen metabolism; urea degradation; CO(2) and NH(3) from urea (urease route): step 1/1. The sequence is that of Urease subunit gamma from Granulibacter bethesdensis (strain ATCC BAA-1260 / CGDNIH1).